The following is a 328-amino-acid chain: Phosphate acyltransferase (328 aa).

The protein belongs to the PlsX family. In terms of assembly, homodimer. Probably interacts with PlsY.

The protein localises to the cytoplasm. It carries out the reaction a fatty acyl-[ACP] + phosphate = an acyl phosphate + holo-[ACP]. It functions in the pathway lipid metabolism; phospholipid metabolism. Catalyzes the reversible formation of acyl-phosphate (acyl-PO(4)) from acyl-[acyl-carrier-protein] (acyl-ACP). This enzyme utilizes acyl-ACP as fatty acyl donor, but not acyl-CoA. In Staphylococcus aureus (strain Mu3 / ATCC 700698), this protein is Phosphate acyltransferase.